The sequence spans 344 residues: tRNA(Ile)-lysidine synthase (344 aa).

Position 35 to 40 (35 to 40 (SGGPDS)) interacts with ATP.

This sequence belongs to the tRNA(Ile)-lysidine synthase family.

It is found in the cytoplasm. It catalyses the reaction cytidine(34) in tRNA(Ile2) + L-lysine + ATP = lysidine(34) in tRNA(Ile2) + AMP + diphosphate + H(+). Its function is as follows. Ligates lysine onto the cytidine present at position 34 of the AUA codon-specific tRNA(Ile) that contains the anticodon CAU, in an ATP-dependent manner. Cytidine is converted to lysidine, thus changing the amino acid specificity of the tRNA from methionine to isoleucine. This chain is tRNA(Ile)-lysidine synthase, found in Methylobacterium sp. (strain 4-46).